Here is a 643-residue protein sequence, read N- to C-terminus: Protein tramtrack, beta isoform (643 aa).

The region spanning 33–98 (TDVTLAVEGQ…MYRGEVSVDQ (66 aa)) is the BTB domain. Disordered regions lie at residues 118–148 (EVND…PQLQ) and 171–300 (ANAG…GLDT). Residue Lys-123 forms a Glycyl lysine isopeptide (Lys-Gly) (interchain with G-Cter in ubiquitin) linkage. Residues 125 to 145 (SPAAAAAGAGATGSESTATTP) are compositionally biased toward low complexity. Positions 176-187 (TPTLPVQPSLLS) are enriched in polar residues. Over residues 192 to 201 (PKRKRGRPRK) the composition is skewed to basic residues. A Glycyl lysine isopeptide (Lys-Gly) (interchain with G-Cter in ubiquitin) cross-link involves residue Lys-201. Residues 254-285 (HTDDLNESRDSLPSKRSKNSKDHRVVSHHEDN) show a composition bias toward basic and acidic residues. Residues Lys-355, Lys-397, Lys-418, Lys-457, Lys-478, and Lys-480 each participate in a glycyl lysine isopeptide (Lys-Gly) (interchain with G-Cter in ubiquitin) cross-link. 2 consecutive C2H2-type zinc fingers follow at residues 508-531 (YRCK…VTSH) and 538-561 (YPCP…KIIH). Lys-545 is covalently cross-linked (Glycyl lysine isopeptide (Lys-Gly) (interchain with G-Cter in ubiquitin)). Residues 584–643 (GVSGASTPPPPDLSGQNSNQSLPATSNALSTSSSSSTSSSSGSLGPLTTSAPPAPAAAAQ) are disordered. A compositionally biased stretch (low complexity) spans 604-643 (SLPATSNALSTSSSSSTSSSSGSLGPLTTSAPPAPAAAAQ).

Can form homodimers. Interacts with Trl in vivo via the BTB domain. Interacts with phyl. Interacts with Usp47. In terms of processing, polyubiquitinated by sina. Polyubiquitin linkage is mainly through 'Lys-48', but linkage through 'Lys-63' also occurs. Deubiquitination by Usp47 leads to its stabilization.

The protein resides in the nucleus. Functionally, binds to a number of sites in the transcriptional regulatory region of ftz. Isoform beta is required to repress inappropriate segmentation gene transcription and repress genes incompatible with development of photoreceptor cell fates. Probable repressor of the transcription of the segmentation genes ftz, eve, h, odd, run, and en. Inhibits Trl-dependent activation of eve. May bind to the region AGGGC/TGG. Degradation of ttk is directed by binding of sinah or sina, via the adapter molecule phyl which binds to the BTB domain of ttk. A second method of degradation exists that is phyl-independent, this is mediated by recognition of motifs in the C-terminus of ttk. The protein is Protein tramtrack, beta isoform (ttk) of Drosophila melanogaster (Fruit fly).